The sequence spans 89 residues: uncharacterized protein (89 aa).

This is an uncharacterized protein from Archaeoglobus fulgidus (strain ATCC 49558 / DSM 4304 / JCM 9628 / NBRC 100126 / VC-16).